The sequence spans 386 residues: Mannitol-1-phosphate 5-dehydrogenase (386 aa).

Residue 4 to 15 (AVHFGAGNIGRG) coordinates NAD(+).

This sequence belongs to the mannitol dehydrogenase family.

The enzyme catalyses D-mannitol 1-phosphate + NAD(+) = beta-D-fructose 6-phosphate + NADH + H(+). This chain is Mannitol-1-phosphate 5-dehydrogenase, found in Oceanobacillus iheyensis (strain DSM 14371 / CIP 107618 / JCM 11309 / KCTC 3954 / HTE831).